The primary structure comprises 385 residues: Transcription factor-like protein DPB (385 aa).

Disordered regions lie at residues 1–53 and 71–102; these read MTTT…EQTI and DIQG…KTGR. A compositionally biased stretch (polar residues) spans 22 to 31; it reads PSTRSWGTAV. The segment covering 32–53 has biased composition (low complexity); that stretch reads SGQSVSTSGSMGSPSSRSEQTI. The DNA-binding element occupies 101-184; sequence GRGLRQFSMK…KKEIQWRGLP (84 aa). The DEF box signature appears at 150–184; that stretch reads DEKNIRRRVYDALNVLMAMDIISKDKKEIQWRGLP. A coiled-coil region spans residues 185–234; the sequence is RTSLSDIEELKNERLSLRNRIEKKTAYSQELEEQYVGLQNLIQRNEHLYS. The interval 296 to 385 is disordered; it reads PPQQPNGRNN…IMNSSMKPEN (90 aa). The span at 300–327 shows a compositional bias: polar residues; that stretch reads PNGRNNSQLVCHNFTPENPNKGPSTGPT. Residues 336-349 are compositionally biased toward low complexity; it reads HLQSQQHQQHSQLQ. Positions 355 to 364 are enriched in polar residues; the sequence is ETNNVTSSAD.

It belongs to the E2F/DP family. In terms of assembly, heterodimer with non-phosphorylated E2FC. No interaction with phosphorylated E2FC. Interacts preferentially with E2FC, but also with E2FA and E2FB. Interacts with SKP2A. Targeted for proteasomal degradation by the SCF(SKP2A) E3 ubiquitin ligase complex. Phosphorylated. In terms of tissue distribution, ubiquitous.

It is found in the nucleus. It localises to the cytoplasm. In terms of biological role, involved in the regulation of the G1/S transition. Increases the DNA binding activity of E2F proteins after heterodimerization. The complex DPB/E2FC restricts cell division and lateral root initiation and may function as a negative regulator of E2F-regulated genes. The interaction with SKP2A is controlled by auxin. In Arabidopsis thaliana (Mouse-ear cress), this protein is Transcription factor-like protein DPB (DPB).